The sequence spans 400 residues: Putative niacin/nicotinamide transporter NiaP (400 aa).

The Cytoplasmic portion of the chain corresponds to 1 to 14; the sequence is MGKQQPISQRKLLG. A helical transmembrane segment spans residues 15-35; the sequence is VAGLGWLFDAMDVGILSFIIA. Topologically, residues 36 to 49 are extracellular; that stretch reads ALHVEWNLSPEEMK. Residues 50-70 traverse the membrane as a helical segment; sequence WIGSVNSIGMAAGAFLFGLLA. Residues 71–77 lie on the Cytoplasmic side of the membrane; it reads DRIGRKK. The next 2 helical transmembrane spans lie at 78–98 and 99–119; these read VFIITLLCFSIGSGISAFVTS and LSAFLILRFVIGMGLGGELPV. Over 120 to 142 the chain is Cytoplasmic; it reads ASTLVSEAVVPEKRGRVIVLLES. A helical transmembrane segment spans residues 143–163; it reads FWAVGWLAAALISYFVIPSFG. Over 164-165 the chain is Extracellular; it reads WQ. Residues 166-186 form a helical membrane-spanning segment; it reads AALLLTALTAFYALYLRTSLP. At 187–217 the chain is on the cytoplasmic side; sequence DSPKYESLSAKKRSMWENVKSVWARQYIRPT. The helical transmembrane segment at 218-238 threads the bilayer; it reads VMLSIVWFCVVFSYYGMFLWL. The Extracellular portion of the chain corresponds to 239-253; sequence PSVMLLKGFSMIQSF. A helical transmembrane segment spans residues 254–274; the sequence is EYVLLMTLAQLPGYFSAAWLI. Over 275–280 the chain is Cytoplasmic; it reads EKAGRK. The chain crosses the membrane as a helical span at residues 281–301; sequence WILVVYLIGTAGSAYFFGTAD. Residues 302–304 are Extracellular-facing; that stretch reads SLS. A helical transmembrane segment spans residues 305–325; that stretch reads LLLTAGVLLSFFNLGAWGVLY. Residues 326-343 lie on the Cytoplasmic side of the membrane; it reads AYTPEQYPTAIRATGSGT. Residues 344-364 form a helical membrane-spanning segment; the sequence is TAAFGRIGGIFGPLLVGTLAA. At 365 to 370 the chain is on the extracellular side; that stretch reads RHISFS. The helical transmembrane segment at 371 to 391 threads the bilayer; it reads VIFSIFCIAILLAVACILIMG. The Cytoplasmic segment spans residues 392–400; the sequence is KETKQTELE.

It belongs to the major facilitator superfamily. Sugar transporter (TC 2.A.1.1) family.

The protein resides in the cell membrane. Functionally, probably involved in the uptake of amidated and deamidated forms of niacin. Increases the growth rate of E.coli that is unable to make niacin de novo; confers increased sensitivity to the toxic niacin analog 6-amino-nicotinamide to wild-type E.coli. There is probably another mechanism for niacin uptake. The chain is Putative niacin/nicotinamide transporter NiaP from Bacillus subtilis (strain 168).